Reading from the N-terminus, the 164-residue chain is uncharacterized protein (164 aa).

The HTH marR-type domain maps to 28-157 (EAEILYQLQG…LIDVLARMRN (130 aa)). Positions 71-94 (QSDLQKKVNIDSAAVTRHLKQLES) form a DNA-binding region, H-T-H motif.

This is an uncharacterized protein from Bacillus subtilis (strain 168).